We begin with the raw amino-acid sequence, 178 residues long: CASP-like protein 5A1 (178 aa).

The interval 1–24 is disordered; that stretch reads MFASRPAVHPVEAPPPTDPVEQPT. The Cytoplasmic portion of the chain corresponds to 1–37; sequence MFASRPAVHPVEAPPPTDPVEQPTGVLMKDLPGMPGT. The helical transmembrane segment at 38–58 threads the bilayer; the sequence is AGGLGLRVAQFVFAGVALAVM. The Extracellular portion of the chain corresponds to 59 to 69; it reads ASTSDFPSVTA. Residues 70–90 form a helical membrane-spanning segment; sequence FCYLVAATIMQCLWSFSLAIV. Over 91 to 105 the chain is Cytoplasmic; the sequence is DIYALLVKRCLRNRR. The chain crosses the membrane as a helical span at residues 106–126; that stretch reads AVCLFAIGDGITAALTFGAAC. Over 127-152 the chain is Extracellular; sequence SSAGITVLIDNDLNICAENHCGSFKT. A helical transmembrane segment spans residues 153–173; it reads ATALAFMSWFALTPSFLLNFW. Residues 174–178 lie on the Cytoplasmic side of the membrane; sequence SMAAR.

Belongs to the Casparian strip membrane proteins (CASP) family. Homodimer and heterodimers.

It is found in the cell membrane. The sequence is that of CASP-like protein 5A1 from Brachypodium distachyon (Purple false brome).